Consider the following 146-residue polypeptide: Hemoglobin subunit beta (146 aa).

Positions 2-146 (HWSAEEKQLI…VAHSLARVYH (145 aa)) constitute a Globin domain. Residues H63 and H92 each contribute to the heme b site.

It belongs to the globin family. As to quaternary structure, heterotetramer of two alpha chains and two beta chains. As to expression, red blood cells.

Functionally, involved in oxygen transport from the lung to the various peripheral tissues. In Microcephalophis gracilis (Graceful small-headed sea snake), this protein is Hemoglobin subunit beta (HBB).